A 381-amino-acid chain; its full sequence is Queuine tRNA-ribosyltransferase (381 aa).

The active-site Proton acceptor is the D96. Substrate contacts are provided by residues 96 to 100 (DSGGF), D150, Q193, and G220. The tract at residues 251–257 (GVGSPDA) is RNA binding. Catalysis depends on D270, which acts as the Nucleophile. The interval 275 to 279 (TRIAR) is RNA binding; important for wobble base 34 recognition. The Zn(2+) site is built by C308, C310, C313, and H339.

It belongs to the queuine tRNA-ribosyltransferase family. Homodimer. Within each dimer, one monomer is responsible for RNA recognition and catalysis, while the other monomer binds to the replacement base PreQ1. Zn(2+) serves as cofactor.

The catalysed reaction is 7-aminomethyl-7-carbaguanine + guanosine(34) in tRNA = 7-aminomethyl-7-carbaguanosine(34) in tRNA + guanine. It functions in the pathway tRNA modification; tRNA-queuosine biosynthesis. Functionally, catalyzes the base-exchange of a guanine (G) residue with the queuine precursor 7-aminomethyl-7-deazaguanine (PreQ1) at position 34 (anticodon wobble position) in tRNAs with GU(N) anticodons (tRNA-Asp, -Asn, -His and -Tyr). Catalysis occurs through a double-displacement mechanism. The nucleophile active site attacks the C1' of nucleotide 34 to detach the guanine base from the RNA, forming a covalent enzyme-RNA intermediate. The proton acceptor active site deprotonates the incoming PreQ1, allowing a nucleophilic attack on the C1' of the ribose to form the product. After dissociation, two additional enzymatic reactions on the tRNA convert PreQ1 to queuine (Q), resulting in the hypermodified nucleoside queuosine (7-(((4,5-cis-dihydroxy-2-cyclopenten-1-yl)amino)methyl)-7-deazaguanosine). This chain is Queuine tRNA-ribosyltransferase, found in Bacillus subtilis (strain 168).